The primary structure comprises 729 residues: MECFIMLGADARTLMRVTLLLLWLKALPSLIDLSQTGSTQYLSSPEVVIPLKVTSRARGAKNSEWLSYSLVFGGRRHVVHMRVKKLLVSTHIPVLTYTEEHTPLSDYPFVPSDCYYHGYVEGALESLVAFSACNGGLQGVLQMNGFSYEIEPIKHSSTFEHLVYTLNNNKTQFPPMLCSLTEKRLLYQPFGVEEAKKSAMKQNYGKLWPHMWFLELAVVVDYGFFTNAQQNLSKVRGDVVLVVNMVDSMYKPLDTYVTLVGIEIWNRGNVLPMENIHQVLEDFSHWKQISLSQVHHDAAHIFIRSSLISVLGIAYIAGICRPPLDCGVENFQGDAWSLFANTVAHELGHTFGMKHDEESCSCGKSGCVMSTFRVPAERFTNCSYSDFMKTTLNQGTCLYNHPRPGAGFLVKRCGNGMVESEEECDCGSVQECEQDPCCFLNCTLRPAAACSFGLCCKDCKFMLLGELCRPKINECDLPEWCNGTSHQCPEDGYVQDGVPCGAGAYCYQKQCNNHDQQCREIFGKGARSASHNCYKEINLQGNRFGHCGTDGTVFLKCRMSDVFCGKVHCENVEDIHHPQAPYVLQNIYANGITCWSTGHCLGMGVPDVGEVKDGTTCGVGKICLHKKCVSLSVLSNACLPETCNRKGVCNNKHHCHCDYGWSPPFCLHRGYGGSIDSGPTSQKRRVIITVLSITVPVLSILICLLIAGLYRIYCKIPSGPKETKASSPG.

Residues 1–39 (MECFIMLGADARTLMRVTLLLLWLKALPSLIDLSQTGST) form the signal peptide. Residues 40 to 209 (QYLSSPEVVI…MKQNYGKLWP (170 aa)) constitute a propeptide that is removed on maturation. N-linked (GlcNAc...) asparagine glycosylation occurs at asparagine 169. Positions 176 to 183 (MLCSLTEK) match the Cysteine switch motif. A Zn(2+)-binding site is contributed by cysteine 178. Residues 210–685 (HMWFLELAVV…DSGPTSQKRR (476 aa)) lie on the Extracellular side of the membrane. The region spanning 212-402 (WFLELAVVVD…NQGTCLYNHP (191 aa)) is the Peptidase M12B domain. Asparagine 231 is a glycosylation site (N-linked (GlcNAc...) asparagine). Disulfide bonds link cysteine 320–cysteine 397, cysteine 360–cysteine 382, and cysteine 362–cysteine 367. Histidine 345 serves as a coordination point for Zn(2+). The active site involves glutamate 346. Zn(2+) is bound by residues histidine 349 and histidine 355. Asparagine 381, asparagine 441, and asparagine 482 each carry an N-linked (GlcNAc...) asparagine glycan. Positions 410–496 (VKRCGNGMVE…QCPEDGYVQD (87 aa)) constitute a Disintegrin domain. 4 disulfide bridges follow: cysteine 468-cysteine 488, cysteine 638-cysteine 649, cysteine 643-cysteine 655, and cysteine 657-cysteine 666. The region spanning 638–667 (CLPETCNRKGVCNNKHHCHCDYGWSPPFCL) is the EGF-like domain. A helical transmembrane segment spans residues 686–706 (VIITVLSITVPVLSILICLLI). Residues 707 to 729 (AGLYRIYCKIPSGPKETKASSPG) lie on the Cytoplasmic side of the membrane.

Requires Zn(2+) as cofactor. Post-translationally, has no obvious cleavage site for furin endopeptidase, suggesting that the proteolytic processing is regulated. In terms of tissue distribution, highly expressed in Leydig cells. Expressed also in cauda epididymidis, vas deferens, convoluted tubules, kidney and the parietal cells of stomach. Not detected on developing spermatocytes or mature sperm.

It is found in the membrane. May be involved in sperm maturation and/or fertilization. May also be involved in epithelia functions associated with establishing and maintaining gradients of ions or nutrients. The sequence is that of Disintegrin and metalloproteinase domain-containing protein 21 (Adam21) from Mus musculus (Mouse).